The chain runs to 758 residues: Spastin (758 aa).

A disordered region spans residues 1–99 (MVRTKNQSSS…PTTCSPRSGH (99 aa)). The Cytoplasmic portion of the chain corresponds to 1-121 (MVRTKNQSSS…KQNLYVVSFP (121 aa)). Residues 1–210 (MVRTKNQSSS…RPIQPLEMAA (210 aa)) are required for localization to punctate cytoplasmic foci. Low complexity-rich tracts occupy residues 8–29 (SSSSSASSSSTKSPIKSSSATG), 43–58 (RSSSASNVAAVVAGGS), 66–76 (SSNRRSPGSSP), and 85–95 (TDDLTPTTCSP). Residues 122 to 142 (IIFLFNVLRSLIYQLFCIFRY) constitute an intramembrane region (helical). At 143-758 (LYGASTKVIY…WSQDYGDITI (616 aa)) the chain is on the cytoplasmic side. Polar residues-rich tracts occupy residues 169–180 (SKEQQQSLNHPS) and 189–198 (QEQQLSNQPQ). Residues 169–221 (SKEQQQSLNHPSELNRDSDGQEQQLSNQPQRFRPIQPLEMAANRPGGGYSPGP) form a disordered region. A sufficient for interaction with microtubules and microtubule severing region spans residues 208–758 (MAANRPGGGY…WSQDYGDITI (551 aa)). The MIT domain maps to 233–308 (HRRAFEYISK…SMARDRLHFL (76 aa)). 2 disordered regions span residues 353 to 376 (RVRSSGYGPKATTGAQPTASGRKL) and 390 to 454 (NKSQ…ASTP). Composition is skewed to polar residues over residues 390–406 (NKSQTLPRNLGSKTSVG) and 425–454 (QFSSGRNTPPQRSRTPINNNGPSGSGASTP). Residues 443-455 (NNGPSGSGASTPV) form a required for interaction with microtubules region. 523 to 530 (GPPGNGKT) is an ATP binding site.

Belongs to the AAA ATPase family. Spastin subfamily. In terms of assembly, homohexamer. The homohexamer is stabilized by ATP-binding. The homohexamer may adopt a ring conformation through which microtubules pass prior to being severed. Interacts with microtubules. Interacts with atl; may be involved in microtubule dynamics.

Its subcellular location is the membrane. The protein resides in the cytoplasm. It is found in the cytoskeleton. It localises to the microtubule organizing center. The protein localises to the centrosome. Its subcellular location is the chromosome. The protein resides in the lipid droplet. It carries out the reaction n ATP + n H2O + a microtubule = n ADP + n phosphate + (n+1) alpha/beta tubulin heterodimers.. Functionally, ATP-dependent microtubule severing protein. Stimulates microtubule minus-end depolymerization and poleward microtubule flux in the mitotic spindle. Regulates microtubule stability in the neuromuscular junction synapse. Involved in lipid metabolism by regulating the size and distribution of lipid droplets. Involved in axon regeneration by regulating microtubule severing. This is Spastin from Drosophila yakuba (Fruit fly).